Reading from the N-terminus, the 548-residue chain is Chaperonin GroEL (548 aa).

ATP-binding positions include 29-32 (TLGP), Lys-50, 86-90 (DGTTT), Gly-414, 478-480 (NAA), and Asp-494.

Belongs to the chaperonin (HSP60) family. As to quaternary structure, forms a cylinder of 14 subunits composed of two heptameric rings stacked back-to-back. Interacts with the co-chaperonin GroES.

It is found in the cytoplasm. It catalyses the reaction ATP + H2O + a folded polypeptide = ADP + phosphate + an unfolded polypeptide.. Together with its co-chaperonin GroES, plays an essential role in assisting protein folding. The GroEL-GroES system forms a nano-cage that allows encapsulation of the non-native substrate proteins and provides a physical environment optimized to promote and accelerate protein folding. In Psychrobacter sp. (strain PRwf-1), this protein is Chaperonin GroEL.